We begin with the raw amino-acid sequence, 398 residues long: 2-amino-3-ketobutyrate coenzyme A ligase (398 aa).

111-112 (CF) provides a ligand contact to pyridoxal 5'-phosphate. His136 is a binding site for substrate. Pyridoxal 5'-phosphate is bound by residues Ser185, 210–213 (DDSH), 241–244 (TLGK), and 274–275 (SN). Residue Lys244 is modified to N6-(pyridoxal phosphate)lysine. Arg368 serves as a coordination point for substrate.

It belongs to the class-II pyridoxal-phosphate-dependent aminotransferase family. Homodimer. It depends on pyridoxal 5'-phosphate as a cofactor.

The catalysed reaction is glycine + acetyl-CoA = (2S)-2-amino-3-oxobutanoate + CoA. It participates in amino-acid degradation; L-threonine degradation via oxydo-reductase pathway; glycine from L-threonine: step 2/2. Functionally, catalyzes the cleavage of 2-amino-3-ketobutyrate to glycine and acetyl-CoA. In Salmonella typhimurium (strain LT2 / SGSC1412 / ATCC 700720), this protein is 2-amino-3-ketobutyrate coenzyme A ligase.